The primary structure comprises 149 residues: Ribonuclease pancreatic alpha-type (149 aa).

The signal sequence occupies residues 1-25 (MGLEKSFILFSLLVLVLGWVQPSLG). Positions 32 and 35 each coordinate substrate. Residue histidine 37 is the Proton acceptor of the active site. 4 disulfide bridges follow: cysteine 51-cysteine 109, cysteine 65-cysteine 120, cysteine 83-cysteine 135, and cysteine 90-cysteine 97. Substrate contacts are provided by residues 66-70 (KPVNT), lysine 91, and arginine 110. The active-site Proton donor is histidine 144.

Belongs to the pancreatic ribonuclease family. As to quaternary structure, monomer.

It localises to the secreted. The catalysed reaction is an [RNA] containing cytidine + H2O = an [RNA]-3'-cytidine-3'-phosphate + a 5'-hydroxy-ribonucleotide-3'-[RNA].. It carries out the reaction an [RNA] containing uridine + H2O = an [RNA]-3'-uridine-3'-phosphate + a 5'-hydroxy-ribonucleotide-3'-[RNA].. Functionally, endonuclease that catalyzes the cleavage of RNA on the 3' side of pyrimidine nucleotides. Acts on single-stranded and double-stranded RNA. This Rattus fuscipes (Bush rat) protein is Ribonuclease pancreatic alpha-type.